The following is an 879-amino-acid chain: Bifunctional uridylyltransferase/uridylyl-removing enzyme (879 aa).

The tract at residues 1–340 is uridylyltransferase; it reads MANVQEDKDF…GTQDLQHAEH (340 aa). The interval 341–700 is uridylyl-removing; the sequence is ISDDFAVANK…IGDENNYGTT (360 aa). One can recognise an HD domain in the interval 458–580; that stretch reads VDEHTFRLVR…VSTPERLDYL (123 aa). ACT domains follow at residues 701 to 782 and 809 to 879; these read ELFI…STKR and TFEL…DLEF.

It belongs to the GlnD family. The cofactor is Mg(2+).

The enzyme catalyses [protein-PII]-L-tyrosine + UTP = [protein-PII]-uridylyl-L-tyrosine + diphosphate. The catalysed reaction is [protein-PII]-uridylyl-L-tyrosine + H2O = [protein-PII]-L-tyrosine + UMP + H(+). Its activity is regulated as follows. Uridylyltransferase (UTase) activity is inhibited by glutamine, while glutamine activates uridylyl-removing (UR) activity. Functionally, modifies, by uridylylation and deuridylylation, the PII regulatory proteins (GlnB and homologs), in response to the nitrogen status of the cell that GlnD senses through the glutamine level. Under low glutamine levels, catalyzes the conversion of the PII proteins and UTP to PII-UMP and PPi, while under higher glutamine levels, GlnD hydrolyzes PII-UMP to PII and UMP (deuridylylation). Thus, controls uridylylation state and activity of the PII proteins, and plays an important role in the regulation of nitrogen assimilation and metabolism. The sequence is that of Bifunctional uridylyltransferase/uridylyl-removing enzyme from Idiomarina loihiensis (strain ATCC BAA-735 / DSM 15497 / L2-TR).